Consider the following 199-residue polypeptide: Phosphatidylethanolamine N-methyltransferase (199 aa).

At 1–12 the chain is on the lumenal side; sequence MTRLLGYVDPLD. The segment at residues 13-33 is an intramembrane region (helical); it reads PSFVAAVITITFNPLYWNVVA. At 34 to 45 the chain is on the lumenal side; the sequence is RWEHKTRKLSRA. Residues 46-66 traverse the membrane as a helical segment; the sequence is FGSPYLACYSLSVTILLLNFL. The Cytoplasmic portion of the chain corresponds to 67 to 93; that stretch reads RSHCFTQAMLSQPRMESLDTPAAYSLG. A helical membrane pass occupies residues 94–114; that stretch reads LALLGLGVVLVLSSFFALGFA. 98 to 100 contributes to the S-adenosyl-L-methionine binding site; the sequence is GLG. The Lumenal segment spans residues 115-157; it reads GTFLGDYFGILKEARVTVFPFNILDNPMYWGSTANYLGWAIMH. The helical transmembrane segment at 158–178 threads the bilayer; that stretch reads ASPTGLLLTVLVALTYIVALL. Residues 179-199 lie on the Cytoplasmic side of the membrane; that stretch reads YEEPFTAEIYRQKASGSHKRS. An S-adenosyl-L-methionine-binding site is contributed by 180-181; that stretch reads EE.

The protein belongs to the class VI-like SAM-binding methyltransferase superfamily. PEMT/PEM2 methyltransferase family. In terms of processing, isoform 2 is N-glycosylated with high-mannose oligosaccharides. Primarily expressed in liver (at protein level).

It is found in the endoplasmic reticulum. The protein resides in the endoplasmic reticulum membrane. It localises to the mitochondrion membrane. It catalyses the reaction a 1,2-diacyl-sn-glycero-3-phospho-N-methylethanolamine + S-adenosyl-L-methionine = a 1,2-diacyl-sn-glycero-3-phospho-N,N-dimethylethanolamine + S-adenosyl-L-homocysteine + H(+). The enzyme catalyses a 1,2-diacyl-sn-glycero-3-phospho-N,N-dimethylethanolamine + S-adenosyl-L-methionine = a 1,2-diacyl-sn-glycero-3-phosphocholine + S-adenosyl-L-homocysteine + H(+). It carries out the reaction a 1,2-diacyl-sn-glycero-3-phosphoethanolamine + S-adenosyl-L-methionine = a 1,2-diacyl-sn-glycero-3-phospho-N-methylethanolamine + S-adenosyl-L-homocysteine + H(+). The catalysed reaction is 1,2-di-(9Z-octadecenoyl)-sn-glycero-3-phosphoethanolamine + S-adenosyl-L-methionine = 1,2-di-(9Z-octadecenoyl)-sn-glycero-3-phospho-N-methylethanolamine + S-adenosyl-L-homocysteine + H(+). It catalyses the reaction 1,2-di-(9Z-octadecenoyl)-sn-glycero-3-phospho-N-methylethanolamine + S-adenosyl-L-methionine = 1,2-di-(9Z-octadecenoyl)-sn-glycero-3-phospho-N,N-dimethylethanolamine + S-adenosyl-L-homocysteine + H(+). The enzyme catalyses 1,2-di-(9Z-octadecenoyl)-sn-glycero-3-phospho-N,N-dimethylethanolamine + S-adenosyl-L-methionine = 1,2-di-(9Z-octadecenoyl)-sn-glycero-3-phosphocholine + S-adenosyl-L-homocysteine + H(+). It carries out the reaction 1,2-di-(9Z,12Z-octadecadienoyl)-sn-glycero-3-phosphoethanolamine + S-adenosyl-L-methionine = 1,2-di-(9Z,12Z-octadecadienoyl)-sn-glycero-3-phospho-N-methylethanolamine + S-adenosyl-L-homocysteine + H(+). The catalysed reaction is 1,2-di-(9Z,12Z-octadecadienoyl)-sn-glycero-3-phospho-N-methylethanolamine + S-adenosyl-L-methionine = 1,2-di-(9Z,12Z-octadecadienoyl)-sn-glycero-3-phospho-N,N-dimethylethanolamine + S-adenosyl-L-homocysteine + H(+). It catalyses the reaction 1,2-di-(9Z,12Z-octadecadienoyl)-sn-glycero-3-phospho-N,N-dimethylethanolamine + S-adenosyl-L-methionine = 1,2-di-(9Z,12Z-octadecadienoyl)-sn-glycero-3-phosphocholine + S-adenosyl-L-homocysteine + H(+). The enzyme catalyses 1,2-di-(9Z,12Z,15Z-octadecatrienoyl)-sn-glycero-3-phosphoethanolamine + S-adenosyl-L-methionine = 1,2-di-(9Z,12Z,15Z-octadecatrienoyl)-sn-glycero-3-phospho-N-methylethanolamine + S-adenosyl-L-homocysteine + H(+). It carries out the reaction 1,2-di-(9Z,12Z,15Z-octadecatrienoyl)-sn-glycero-3-phospho-N-methylethanolamine + S-adenosyl-L-methionine = 1,2-di-(9Z,12Z,15Z-octadecatrienoyl)-sn-glycero-3-phospho-N,N-dimethylethanolamine + S-adenosyl-L-homocysteine + H(+). The catalysed reaction is 1,2-di-(9Z,12Z,15Z-octadecatrienoyl)-sn-glycero-3-phospho-N,N-dimethylethanolamine + S-adenosyl-L-methionine = 1,2-di-(9Z,12Z,15Z-octadecatrienoyl)-sn-glycero-3-phosphocholine + S-adenosyl-L-homocysteine + H(+). It catalyses the reaction 1-hexadecanoyl-2-(4Z,7Z,10Z,13Z,16Z,19Z-docosahexaenoyl)-sn-glycero-3-phosphoethanolamine + S-adenosyl-L-methionine = 1-hexadecanoyl-2-(4Z,7Z,10Z,13Z,16Z,19Z-docosahexaenoyl)-sn-glycero-3-phospho-N-methylethanolamine + S-adenosyl-L-homocysteine + H(+). The enzyme catalyses 1-hexadecanoyl-2-(4Z,7Z,10Z,13Z,16Z,19Z-docosahexaenoyl)-sn-glycero-3-phospho-N-methylethanolamine + S-adenosyl-L-methionine = 1-hexadecanoyl-2-(4Z,7Z,10Z,13Z,16Z,19Z-docosahexaenoyl)-sn-glycero-3-phospho-N,N-dimethylethanolamine + S-adenosyl-L-homocysteine + H(+). It carries out the reaction 1-hexadecanoyl-2-(4Z,7Z,10Z,13Z,16Z,19Z-docosahexaenoyl)-sn-glycero-3-phospho-N,N-dimethylethanolamine + S-adenosyl-L-methionine = 1-hexadecanoyl-2-(4Z,7Z,10Z,13Z,16Z,19Z-docosahexaenoyl)-sn-glycero-3-phosphocholine + S-adenosyl-L-homocysteine + H(+). The protein operates within phospholipid metabolism; phosphatidylcholine biosynthesis. Its activity is regulated as follows. The first methylation is rate-limiting. Its function is as follows. Catalyzes the three sequential steps of the methylation pathway for the biosynthesis of phosphatidylcholine, a critical and essential component for membrane structure. Uses S-adenosylmethionine (S-adenosyl-L-methionine, SAM or AdoMet) as the methyl group donor for the methylation of phosphatidylethanolamine (1,2-diacyl-sn-glycero-3-phosphoethanolamine, PE) to phosphatidylmonomethylethanolamine (1,2-diacyl-sn-glycero-3-phospho-N-methylethanolamine, PMME), PMME to phosphatidyldimethylethanolamine (1,2-diacyl-sn-glycero-3-phospho-N,N-dimethylethanolamine, PDME), and PDME to phosphatidylcholine (1,2-diacyl-sn-glycero-3-phosphocholine, PC), producing S-adenosyl-L-homocysteine in each step. Responsible for approximately 30% of hepatic PC with the CDP-choline pathway accounting for the other 70%. Functionally, catalyzes the three sequential steps of the methylation of 1,2-diacyl-sn-glycero-3-phospho-N-methylethanolamine (PMME) to 1,2-diacyl-sn-glycero-3-phospho-N,N-dimethylethanolamine (PDME) more efficiently than isoform 2. Induces increase in PC species with longer polyunsaturated chains than isoform 2. In terms of biological role, produces a higher increase in the level of PC species containing long chains with three double bonds than isoform 1. The protein is Phosphatidylethanolamine N-methyltransferase of Homo sapiens (Human).